The following is a 224-amino-acid chain: 7-cyano-7-deazaguanine synthase (224 aa).

Residue 9–19 participates in ATP binding; sequence ISGGMDSTLCA. Residues Cys-190, Cys-198, Cys-201, and Cys-204 each coordinate Zn(2+).

This sequence belongs to the QueC family. Requires Zn(2+) as cofactor.

It catalyses the reaction 7-carboxy-7-deazaguanine + NH4(+) + ATP = 7-cyano-7-deazaguanine + ADP + phosphate + H2O + H(+). It participates in purine metabolism; 7-cyano-7-deazaguanine biosynthesis. Functionally, catalyzes the ATP-dependent conversion of 7-carboxy-7-deazaguanine (CDG) to 7-cyano-7-deazaguanine (preQ(0)). The chain is 7-cyano-7-deazaguanine synthase from Campylobacter jejuni (strain RM1221).